We begin with the raw amino-acid sequence, 513 residues long: ATP synthase subunit alpha (513 aa).

G169–T176 is an ATP binding site.

It belongs to the ATPase alpha/beta chains family. In terms of assembly, F-type ATPases have 2 components, CF(1) - the catalytic core - and CF(0) - the membrane proton channel. CF(1) has five subunits: alpha(3), beta(3), gamma(1), delta(1), epsilon(1). CF(0) has three main subunits: a(1), b(2) and c(9-12). The alpha and beta chains form an alternating ring which encloses part of the gamma chain. CF(1) is attached to CF(0) by a central stalk formed by the gamma and epsilon chains, while a peripheral stalk is formed by the delta and b chains.

The protein localises to the cell inner membrane. It catalyses the reaction ATP + H2O + 4 H(+)(in) = ADP + phosphate + 5 H(+)(out). Functionally, produces ATP from ADP in the presence of a proton gradient across the membrane. The alpha chain is a regulatory subunit. This Pseudoalteromonas translucida (strain TAC 125) protein is ATP synthase subunit alpha.